The chain runs to 248 residues: Probable transcriptional regulatory protein Fphi_1565 (248 aa).

Belongs to the TACO1 family.

The protein resides in the cytoplasm. The chain is Probable transcriptional regulatory protein Fphi_1565 from Francisella philomiragia subsp. philomiragia (strain ATCC 25017 / CCUG 19701 / FSC 153 / O#319-036).